The following is a 133-amino-acid chain: Peptide methionine sulfoxide reductase MsrB (133 aa).

A compositionally biased stretch (basic and acidic residues) spans 1–12 (MSEKVQKSEHEW). Residues 1 to 36 (MSEKVQKSEHEWQQQLTPEQYRVTREKGTERPFTGD) form a disordered region. Residues 9–132 (EHEWQQQLTP…NSVSLDFHPG (124 aa)) form the MsrB domain. Zn(2+) is bound by residues Cys-48, Cys-51, Cys-97, and Cys-100. Cys-121 acts as the Nucleophile in catalysis.

It belongs to the MsrB Met sulfoxide reductase family. It depends on Zn(2+) as a cofactor.

It catalyses the reaction L-methionyl-[protein] + [thioredoxin]-disulfide + H2O = L-methionyl-(R)-S-oxide-[protein] + [thioredoxin]-dithiol. This Chromohalobacter salexigens (strain ATCC BAA-138 / DSM 3043 / CIP 106854 / NCIMB 13768 / 1H11) protein is Peptide methionine sulfoxide reductase MsrB.